The following is a 130-amino-acid chain: Small ribosomal subunit protein uS11 (130 aa).

Belongs to the universal ribosomal protein uS11 family. As to quaternary structure, part of the 30S ribosomal subunit. Interacts with proteins S7 and S18. Binds to IF-3.

Functionally, located on the platform of the 30S subunit, it bridges several disparate RNA helices of the 16S rRNA. Forms part of the Shine-Dalgarno cleft in the 70S ribosome. The chain is Small ribosomal subunit protein uS11 from Nitratiruptor sp. (strain SB155-2).